A 61-amino-acid polypeptide reads, in one-letter code: UPF0434 protein PFLU_3771 (61 aa).

The protein belongs to the UPF0434 family.

In Pseudomonas fluorescens (strain SBW25), this protein is UPF0434 protein PFLU_3771.